A 452-amino-acid polypeptide reads, in one-letter code: UDP-N-acetylmuramoylalanine--D-glutamate ligase (452 aa).

115–121 (GTNGKTT) lines the ATP pocket.

Belongs to the MurCDEF family.

It is found in the cytoplasm. It carries out the reaction UDP-N-acetyl-alpha-D-muramoyl-L-alanine + D-glutamate + ATP = UDP-N-acetyl-alpha-D-muramoyl-L-alanyl-D-glutamate + ADP + phosphate + H(+). It participates in cell wall biogenesis; peptidoglycan biosynthesis. Its function is as follows. Cell wall formation. Catalyzes the addition of glutamate to the nucleotide precursor UDP-N-acetylmuramoyl-L-alanine (UMA). This chain is UDP-N-acetylmuramoylalanine--D-glutamate ligase, found in Geobacter sp. (strain M21).